A 252-amino-acid polypeptide reads, in one-letter code: tRNA (guanine-N(1)-)-methyltransferase (252 aa).

Residues Gly-110 and 130–135 contribute to the S-adenosyl-L-methionine site; that span reads VGDFVL.

The protein belongs to the RNA methyltransferase TrmD family. Homodimer.

It localises to the cytoplasm. The catalysed reaction is guanosine(37) in tRNA + S-adenosyl-L-methionine = N(1)-methylguanosine(37) in tRNA + S-adenosyl-L-homocysteine + H(+). In terms of biological role, specifically methylates guanosine-37 in various tRNAs. The sequence is that of tRNA (guanine-N(1)-)-methyltransferase from Magnetococcus marinus (strain ATCC BAA-1437 / JCM 17883 / MC-1).